The chain runs to 470 residues: Protein ASPARTIC PROTEASE IN GUARD CELL 2 (470 aa).

The signal sequence occupies residues 1–19 (MLLPLFFFFLHLHLHLSSS). One can recognise a Peptidase A1 domain in the interval 131 to 466 (YFVRIGVGSP…DGANGFVGFG (336 aa)). Asp149 is an active-site residue. Intrachain disulfides connect Cys159–Cys162, Cys165–Cys239, Cys186–Cys204, Cys191–Cys199, Cys278–Cys470, and Cys389–Cys431. Residue Asp350 is part of the active site.

It belongs to the peptidase A1 family.

Aspartic protease that may be involved in drought avoidance through abscisic acid signaling. This is Protein ASPARTIC PROTEASE IN GUARD CELL 2 (ASPG2) from Arabidopsis thaliana (Mouse-ear cress).